The chain runs to 101 residues: RNA-3 uncharacterized 11.6 kDa protein (101 aa).

This Beet necrotic yellow vein mosaic virus (isolate Yugoslavia/G1) (BNYVV) protein is RNA-3 uncharacterized 11.6 kDa protein.